Consider the following 169-residue polypeptide: Putative pre-16S rRNA nuclease (169 aa).

Over residues 1 to 19 (MTDSDHRLPDRPGEGDPGR) the composition is skewed to basic and acidic residues. The interval 1-22 (MTDSDHRLPDRPGEGDPGRGRR) is disordered.

The protein belongs to the YqgF nuclease family.

Its subcellular location is the cytoplasm. In terms of biological role, could be a nuclease involved in processing of the 5'-end of pre-16S rRNA. The sequence is that of Putative pre-16S rRNA nuclease from Mycobacterium sp. (strain JLS).